A 238-amino-acid chain; its full sequence is 4-hydroxy-tetrahydrodipicolinate reductase (238 aa).

12–17 (GASGRM) lines the NAD(+) pocket. Arg-40 serves as a coordination point for NADP(+). NAD(+) contacts are provided by residues 93–95 (GTT) and 117–120 (ASNF). Catalysis depends on His-149, which acts as the Proton donor/acceptor. A (S)-2,3,4,5-tetrahydrodipicolinate-binding site is contributed by His-150. The Proton donor role is filled by Lys-153. 159 to 160 (GT) is a (S)-2,3,4,5-tetrahydrodipicolinate binding site.

This sequence belongs to the DapB family.

The protein resides in the cytoplasm. It carries out the reaction (S)-2,3,4,5-tetrahydrodipicolinate + NAD(+) + H2O = (2S,4S)-4-hydroxy-2,3,4,5-tetrahydrodipicolinate + NADH + H(+). The catalysed reaction is (S)-2,3,4,5-tetrahydrodipicolinate + NADP(+) + H2O = (2S,4S)-4-hydroxy-2,3,4,5-tetrahydrodipicolinate + NADPH + H(+). Its pathway is amino-acid biosynthesis; L-lysine biosynthesis via DAP pathway; (S)-tetrahydrodipicolinate from L-aspartate: step 4/4. In terms of biological role, catalyzes the conversion of 4-hydroxy-tetrahydrodipicolinate (HTPA) to tetrahydrodipicolinate. The chain is 4-hydroxy-tetrahydrodipicolinate reductase from Xanthomonas axonopodis pv. citri (strain 306).